Here is a 355-residue protein sequence, read N- to C-terminus: MKTIDLTPREREVLGIIIQAYVVSASPVSSRFIAKNYNLGLSDATIRNVMADLEDAGFISQPHTSAGRVPTDKGYRYYVDLIMMVQGIDDDEKRHIDSNLRLFTIDRKDSSEVLFAAAKVLGSISQQLSVVMSPRLSLGVFERLDMVLLSSSRIMVILSIQSLFVKTIVMELDLDVSRRQIEMVVDLLNQRLSGLTLDEIRTSIAERLADCDTDQGLLNRIVRSADELFDESPVLDRLYIAGAEYIVSQPEFDQPQKVRDLICMIEDKTRIARIVDLDGVVVPQVMTERDVSITIGRENPASTEGDFTVVTTPYFVGNTMGRLAVLGPKRMDYARVVRVVNYMADRLSTTFSDVN.

This sequence belongs to the HrcA family.

Negative regulator of class I heat shock genes (grpE-dnaK-dnaJ and groELS operons). Prevents heat-shock induction of these operons. This chain is Heat-inducible transcription repressor HrcA, found in Prosthecochloris aestuarii (strain DSM 271 / SK 413).